A 1264-amino-acid chain; its full sequence is Valine--tRNA ligase (1264 aa).

Ser2 carries the N-acetylserine modification. Positions 89–219 (GSRAAVLVQQ…YSGARPLSHQ (131 aa)) constitute a GST C-terminal domain. The interval 217-296 (SHQPGPEAPA…GEKKDVSGPM (80 aa)) is disordered. Basic and acidic residues-rich tracts occupy residues 234–248 (LKKE…EKFQ) and 261–275 (GEKK…KRDP). The 'HIGH' region signature appears at 344–354 (PNVTGSLHLGH). Phosphoserine occurs at positions 437 and 527. Lys645 is modified (N6-acetyllysine). The short motif at 862 to 866 (KMSKS) is the 'KMSKS' region element. Lys865 serves as a coordination point for ATP.

The protein belongs to the class-I aminoacyl-tRNA synthetase family. As to quaternary structure, forms high-molecular-mass aggregates with elongation factor 1.

The enzyme catalyses tRNA(Val) + L-valine + ATP = L-valyl-tRNA(Val) + AMP + diphosphate. Can be regulated by protein kinase C-dependent phosphorylation. Catalyzes the attachment of valine to tRNA(Val). The protein is Valine--tRNA ligase of Homo sapiens (Human).